The sequence spans 185 residues: Elongation factor P (185 aa).

The protein belongs to the elongation factor P family.

Its subcellular location is the cytoplasm. The protein operates within protein biosynthesis; polypeptide chain elongation. Functionally, involved in peptide bond synthesis. Stimulates efficient translation and peptide-bond synthesis on native or reconstituted 70S ribosomes in vitro. Probably functions indirectly by altering the affinity of the ribosome for aminoacyl-tRNA, thus increasing their reactivity as acceptors for peptidyl transferase. This Symbiobacterium thermophilum (strain DSM 24528 / JCM 14929 / IAM 14863 / T) protein is Elongation factor P.